The sequence spans 258 residues: Ribosomal RNA large subunit methyltransferase E (258 aa).

Residues Gly-58, Trp-60, Asp-78, Asp-96, and Asp-120 each coordinate S-adenosyl-L-methionine. The active-site Proton acceptor is the Lys-160.

Belongs to the class I-like SAM-binding methyltransferase superfamily. RNA methyltransferase RlmE family.

The protein localises to the cytoplasm. The enzyme catalyses uridine(2552) in 23S rRNA + S-adenosyl-L-methionine = 2'-O-methyluridine(2552) in 23S rRNA + S-adenosyl-L-homocysteine + H(+). Specifically methylates the uridine in position 2552 of 23S rRNA at the 2'-O position of the ribose in the fully assembled 50S ribosomal subunit. The protein is Ribosomal RNA large subunit methyltransferase E of Methanococcus maripaludis (strain DSM 14266 / JCM 13030 / NBRC 101832 / S2 / LL).